We begin with the raw amino-acid sequence, 516 residues long: GMP synthase [glutamine-hydrolyzing] (516 aa).

Residues 8–198 (KILILDFGSQ…VVNICGCDTL (191 aa)) form the Glutamine amidotransferase type-1 domain. The active-site Nucleophile is the Cys84. Active-site residues include His172 and Glu174. The region spanning 199–391 (WNIENIIEND…LGLPYNMLYR (193 aa)) is the GMPS ATP-PPase domain. 226–232 (SGGVDSS) is an ATP binding site.

Homodimer.

The enzyme catalyses XMP + L-glutamine + ATP + H2O = GMP + L-glutamate + AMP + diphosphate + 2 H(+). Its pathway is purine metabolism; GMP biosynthesis; GMP from XMP (L-Gln route): step 1/1. Its function is as follows. Catalyzes the synthesis of GMP from XMP. The protein is GMP synthase [glutamine-hydrolyzing] of Francisella tularensis subsp. holarctica (strain LVS).